Here is a 242-residue protein sequence, read N- to C-terminus: DnaJ homolog subfamily B member 6 (242 aa).

The 67-residue stretch at 3–69 (EYYDVLGVQR…KKRDIYDKYG (67 aa)) folds into the J domain.

Homooligomer.

It localises to the cytoplasm. Its subcellular location is the perinuclear region. It is found in the nucleus. Has a stimulatory effect on the ATPase activity of HSP70 in a dose-dependent and time-dependent manner and hence acts as a co-chaperone of HSP70. Plays an indispensable role in the organization of KRT8/KRT18 filaments. Acts as an endogenous molecular chaperone for neuronal proteins including huntingtin. Suppresses aggregation and toxicity of polyglutamine-containing, aggregation-prone proteins. Also reduces cellular toxicity and caspase-3 activity. The protein is DnaJ homolog subfamily B member 6 of Xenopus tropicalis (Western clawed frog).